We begin with the raw amino-acid sequence, 370 residues long: tRNA-specific 2-thiouridylase MnmA (370 aa).

Residues 11-18 (AMSGGVDS) and Met-37 each bind ATP. The tract at residues 99–101 (NPD) is interaction with target base in tRNA. The active-site Nucleophile is the Cys-104. A disulfide bond links Cys-104 and Cys-201. Gly-129 is an ATP binding site. The interaction with tRNA stretch occupies residues 151-153 (KDQ). The active-site Cysteine persulfide intermediate is the Cys-201. The interaction with tRNA stretch occupies residues 313–314 (RY).

It belongs to the MnmA/TRMU family. Interacts with TusE.

Its subcellular location is the cytoplasm. It catalyses the reaction S-sulfanyl-L-cysteinyl-[protein] + uridine(34) in tRNA + AH2 + ATP = 2-thiouridine(34) in tRNA + L-cysteinyl-[protein] + A + AMP + diphosphate + H(+). Functionally, catalyzes the 2-thiolation of uridine at the wobble position (U34) of tRNA(Lys), tRNA(Glu) and tRNA(Gln), leading to the formation of s(2)U34, the first step of tRNA-mnm(5)s(2)U34 synthesis. Sulfur is provided by IscS, via a sulfur-relay system. Binds ATP and its substrate tRNAs. This Buchnera aphidicola subsp. Baizongia pistaciae (strain Bp) protein is tRNA-specific 2-thiouridylase MnmA.